The sequence spans 744 residues: Elongation factor G, mitochondrial (744 aa).

A mitochondrion-targeting transit peptide spans 1–33 (MTISNLIRSRCSLAAAKSFLENVKSFSSHATFA). In terms of domain architecture, tr-type G spans 39–317 (EKIRNIGISA…VLDYLPHPGE (279 aa)). GTP contacts are provided by residues 48–55 (AHIDSGKT), 115–119 (DTPGH), and 169–172 (NKLD).

Belongs to the TRAFAC class translation factor GTPase superfamily. Classic translation factor GTPase family. EF-G/EF-2 subfamily.

The protein localises to the mitochondrion. Its pathway is protein biosynthesis; polypeptide chain elongation. Mitochondrial GTPase that catalyzes the GTP-dependent ribosomal translocation step during translation elongation. During this step, the ribosome changes from the pre-translocational (PRE) to the post-translocational (POST) state as the newly formed A-site-bound peptidyl-tRNA and P-site-bound deacylated tRNA move to the P and E sites, respectively. Catalyzes the coordinated movement of the two tRNA molecules, the mRNA and conformational changes in the ribosome. The chain is Elongation factor G, mitochondrial from Anopheles gambiae (African malaria mosquito).